Reading from the N-terminus, the 547-residue chain is Glucose-6-phosphate isomerase (547 aa).

Glu-353 functions as the Proton donor in the catalytic mechanism. Catalysis depends on residues His-384 and Lys-512.

It belongs to the GPI family.

The protein resides in the cytoplasm. It catalyses the reaction alpha-D-glucose 6-phosphate = beta-D-fructose 6-phosphate. It functions in the pathway carbohydrate biosynthesis; gluconeogenesis. It participates in carbohydrate degradation; glycolysis; D-glyceraldehyde 3-phosphate and glycerone phosphate from D-glucose: step 2/4. In terms of biological role, catalyzes the reversible isomerization of glucose-6-phosphate to fructose-6-phosphate. The chain is Glucose-6-phosphate isomerase from Pseudoalteromonas atlantica (strain T6c / ATCC BAA-1087).